The following is a 605-amino-acid chain: Elongation factor 4 (605 aa).

A tr-type G domain is found at 5–187 (ALIRNFSIIA…AVVERIPPPK (183 aa)). Residues 17–22 (DHGKST) and 134–137 (NKID) contribute to the GTP site.

It belongs to the TRAFAC class translation factor GTPase superfamily. Classic translation factor GTPase family. LepA subfamily.

The protein resides in the cell inner membrane. It carries out the reaction GTP + H2O = GDP + phosphate + H(+). Required for accurate and efficient protein synthesis under certain stress conditions. May act as a fidelity factor of the translation reaction, by catalyzing a one-codon backward translocation of tRNAs on improperly translocated ribosomes. Back-translocation proceeds from a post-translocation (POST) complex to a pre-translocation (PRE) complex, thus giving elongation factor G a second chance to translocate the tRNAs correctly. Binds to ribosomes in a GTP-dependent manner. In Novosphingobium aromaticivorans (strain ATCC 700278 / DSM 12444 / CCUG 56034 / CIP 105152 / NBRC 16084 / F199), this protein is Elongation factor 4.